Reading from the N-terminus, the 354-residue chain is MSRLLHAEEWAEVKELGDHHRQPQPHHLPQPPPPPQPPATLQAREHPVYPPELSLLDSTDPRAWLAPTLQGICTARAAQYLLHSPELGASEAAAPRDEVDGRGELVRRSSGGASSSKSPGPVKVREQLCKLKGGVVVDELGCSRQRAPSSKQVNGVQKQRRLAANARERRRMHGLNHAFDQLRNVIPSFNNDKKLSKYETLQMAQIYINALSELLQTPSGGEQPPPPPASCKSDHHHLRTAASYEGGAGNATAAGAQQASGGSQRPTPPGSCRTRFSAPASAGGYSVQLDALHFSTFEDSALTAMMAQKNLSPSLPGSILQPVQEENSKTSPRSHRSDGEFSPHSHYSDSDEAS.

Over residues M1 to R21 the composition is skewed to basic and acidic residues. Disordered stretches follow at residues M1–L55 and E91–V122. Residues H26 to P38 are compositionally biased toward pro residues. Basic and acidic residues predominate over residues A94–R107. Low complexity predominate over residues R108–V122. In terms of domain architecture, bHLH spans Q159–L211. Disordered stretches follow at residues Q216–S277 and S312–S354. A compositionally biased stretch (low complexity) spans N250–Q264. Residues H335 to S354 are compositionally biased toward basic and acidic residues.

In terms of assembly, efficient DNA binding requires dimerization with another bHLH protein.

It localises to the nucleus. Functionally, transcriptional regulator. Activates E box-dependent transcription in collaboration with TCF3/E47, but the activity is completely antagonized by the negative regulator of neurogenesis HES1. Plays a role in the differentiation of subsets of neural cells by activating E box-dependent transcription. In Homo sapiens (Human), this protein is Transcription factor ATOH1.